The sequence spans 342 residues: Transcription initiation factor TFIID subunit 12 (342 aa).

Residues 1 to 221 form a disordered region; sequence MKMEEFSPPT…QAPPPQMIPA (221 aa). The span at 12–35 shows a compositional bias: polar residues; sequence PNNHVIVQANPQIAAALSTNSPMQ. 4 stretches are compositionally biased toward low complexity: residues 39-59, 67-89, 96-146, and 180-192; these read PPQG…VGQP, PMRM…QMRA, QQQQ…HLMG, and QQIM…QQHQ. Residues 193–218 are compositionally biased toward pro residues; the sequence is QPPPSQQIQQPPIPQPQQQQAPPPQM. In terms of domain architecture, Histone-fold spans 230 to 297; that stretch reads EKSKLDDLMQ…EFILKNVYNM (68 aa).

This sequence belongs to the TAF12 family. Interacts (via histone-fold domain) with taf-4 (via the histone-fold domain). Interaction may facilitate the nuclear localization of taf-4.

It localises to the nucleus. Its function is as follows. Part of the general transcription factor complex TFIID. Plays a role in recruiting taf-4 to the nucleus and thereby activating transcription initiation by RNA polymerase II, as part of the TFIID complex. The polypeptide is Transcription initiation factor TFIID subunit 12 (Caenorhabditis elegans).